Consider the following 531-residue polypeptide: MKLAYWMYAGPAHLGVLRVASSFKNVHAIMHAPLGDDYFNVMSSMLERDRDFTPVTASIVDRHVLATGSQRKVVATIHRKDQEDEPDLILVTPTCTSSILQEDLGNYVARAAPYTKSEVLLADVQHYRIHELQAQDRILEQVVRHIMDPERQKGTLDTTPTPTPSANLIGFFDLGFHHRDDSRELRRLLHGLGIEINSVLPKGGSIPDLHQLAKAWFNIIPYREAGLMTAKYLEESFHIPYIDRTPIGLIETRKFIGEIEAILQTRGVDRHEYYEKFIIHHETIVSQAAWFARSIDCQNLLGKRVIVFGDCTHAATITKLLVRELGIHVVCAGTYCKYDEAWFREQVNGYVDEILITEDHTQVADTISRLEPAAIFGTQMERHVGKRLDIPCGVISAPAHIQNFPLSFRPFLGYEGTNVVADLIYNTFRLGMEDHLLELFGGHDTKQIGESQMAESISNSKGCQWTPEAEKELAHIPRFVRSKVKRATERFAQEHGYPVINLECIYLAKQSTSVDIETIQHLLFNDETEVQ.

A [4Fe-4S] cluster-binding site is contributed by D36. D296 acts as the Proton donor in catalysis. 431–432 lines the substrate pocket; that stretch reads GM.

Belongs to the ChlB/BchB/BchZ family. Protochlorophyllide reductase is composed of three subunits; ChlL, ChlN and ChlB. Forms a heterotetramer of two ChlB and two ChlN subunits. [4Fe-4S] cluster serves as cofactor.

The protein resides in the plastid. It localises to the chloroplast. It carries out the reaction chlorophyllide a + oxidized 2[4Fe-4S]-[ferredoxin] + 2 ADP + 2 phosphate = protochlorophyllide a + reduced 2[4Fe-4S]-[ferredoxin] + 2 ATP + 2 H2O. It participates in porphyrin-containing compound metabolism; chlorophyll biosynthesis (light-independent). Component of the dark-operative protochlorophyllide reductase (DPOR) that uses Mg-ATP and reduced ferredoxin to reduce ring D of protochlorophyllide (Pchlide) to form chlorophyllide a (Chlide). This reaction is light-independent. The NB-protein (ChlN-ChlB) is the catalytic component of the complex. In Nephroselmis olivacea (Green alga), this protein is Light-independent protochlorophyllide reductase subunit B.